Consider the following 309-residue polypeptide: Foldase protein PrsA (309 aa).

An N-terminal signal peptide occupies residues 1-22 (MKTRSKLAAGFLTLMSVATLAA). Residue Cys-23 is the site of N-palmitoyl cysteine attachment. A lipid anchor (S-diacylglycerol cysteine) is attached at Cys-23. The PpiC domain occupies 146 to 241 (TPETSVQVIK…TSYYIIKVTD (96 aa)).

It belongs to the PrsA family.

Its subcellular location is the cell membrane. The enzyme catalyses [protein]-peptidylproline (omega=180) = [protein]-peptidylproline (omega=0). Plays a major role in protein secretion by helping the post-translocational extracellular folding of several secreted proteins. This Streptococcus agalactiae serotype III (strain NEM316) protein is Foldase protein PrsA.